The chain runs to 469 residues: Proline--tRNA ligase (469 aa).

This sequence belongs to the class-II aminoacyl-tRNA synthetase family. ProS type 3 subfamily. In terms of assembly, homodimer.

It is found in the cytoplasm. It catalyses the reaction tRNA(Pro) + L-proline + ATP = L-prolyl-tRNA(Pro) + AMP + diphosphate. Functionally, catalyzes the attachment of proline to tRNA(Pro) in a two-step reaction: proline is first activated by ATP to form Pro-AMP and then transferred to the acceptor end of tRNA(Pro). The sequence is that of Proline--tRNA ligase from Methanobrevibacter smithii (strain ATCC 35061 / DSM 861 / OCM 144 / PS).